Here is a 115-residue protein sequence, read N- to C-terminus: Putative TGFB1-induced anti-apoptotic factor 1 (115 aa).

As to expression, not detectable in normal kidney and liver. Up-regulated in chronic and acute allograft rejection: expressed in the inflammatory infiltrate and in tubular epithelial cells.

It localises to the nucleus. Inhibits the cytotoxic effects of TNF-alpha and overexpressed TNF receptor adapters TRADD, FADD, and RIPK1. Involved in TGF-beta1 inhibition of IkappaB-alpha expression and suppression of TNF-mediated IkappaB-alpha degradation. The polypeptide is Putative TGFB1-induced anti-apoptotic factor 1 (MYO18A) (Homo sapiens (Human)).